Consider the following 246-residue polypeptide: Acetoacetyl-CoA reductase (246 aa).

NADP(+) contacts are provided by residues 12-14 (GGI) and 88-92 (CAGIT). Residues D94 and 147–150 (QFGQ) contribute to the substrate site. Catalysis depends on Y153, which acts as the Proton acceptor. 183–186 (PGYV) serves as a coordination point for NADP(+). 184-185 (GY) is a substrate binding site.

Belongs to the short-chain dehydrogenases/reductases (SDR) family.

Its subcellular location is the cytoplasm. The catalysed reaction is a (3R)-3-hydroxyacyl-CoA + NADP(+) = a 3-oxoacyl-CoA + NADPH + H(+). It functions in the pathway biopolymer metabolism; poly-(R)-3-hydroxybutanoate biosynthesis. This Allochromatium vinosum (strain ATCC 17899 / DSM 180 / NBRC 103801 / NCIMB 10441 / D) (Chromatium vinosum) protein is Acetoacetyl-CoA reductase.